We begin with the raw amino-acid sequence, 512 residues long: Transactivator/viroplasmin protein (512 aa).

Disordered regions lie at residues 76 to 123 (GNER…NPVA) and 474 to 512 (ADSS…IPSI). The span at 476 to 487 (SSSTSGEQNNVE) shows a compositional bias: polar residues. Positions 499 to 512 (YDERSDDHKRIPSI) are enriched in basic and acidic residues.

This sequence belongs to the caulimoviridae viroplasmin family.

It is found in the host cytoplasm. Functionally, enhances the translation of downstream ORFs on polycistronic mRNAs derived from figwort mosaic virus. This Figwort mosaic virus (strain DxS) (FMV) protein is Transactivator/viroplasmin protein.